A 269-amino-acid chain; its full sequence is 3-methyl-2-oxobutanoate hydroxymethyltransferase (269 aa).

The Mg(2+) site is built by Asp-43 and Asp-82. 3-methyl-2-oxobutanoate-binding positions include 43–44 (DS), Asp-82, and Lys-110. Glu-112 serves as a coordination point for Mg(2+). Glu-179 functions as the Proton acceptor in the catalytic mechanism.

Belongs to the PanB family. As to quaternary structure, homodecamer; pentamer of dimers. The cofactor is Mg(2+).

It is found in the cytoplasm. The catalysed reaction is 3-methyl-2-oxobutanoate + (6R)-5,10-methylene-5,6,7,8-tetrahydrofolate + H2O = 2-dehydropantoate + (6S)-5,6,7,8-tetrahydrofolate. Its pathway is cofactor biosynthesis; (R)-pantothenate biosynthesis; (R)-pantoate from 3-methyl-2-oxobutanoate: step 1/2. In terms of biological role, catalyzes the reversible reaction in which hydroxymethyl group from 5,10-methylenetetrahydrofolate is transferred onto alpha-ketoisovalerate to form ketopantoate. The protein is 3-methyl-2-oxobutanoate hydroxymethyltransferase of Acinetobacter baumannii (strain SDF).